Consider the following 320-residue polypeptide: o-succinylbenzoate synthase (320 aa).

Lysine 133 functions as the Proton donor in the catalytic mechanism. Mg(2+) contacts are provided by aspartate 161, glutamate 190, and aspartate 213. Lysine 235 (proton acceptor) is an active-site residue.

The protein belongs to the mandelate racemase/muconate lactonizing enzyme family. MenC type 1 subfamily. Requires a divalent metal cation as cofactor.

It carries out the reaction (1R,6R)-6-hydroxy-2-succinyl-cyclohexa-2,4-diene-1-carboxylate = 2-succinylbenzoate + H2O. It participates in quinol/quinone metabolism; 1,4-dihydroxy-2-naphthoate biosynthesis; 1,4-dihydroxy-2-naphthoate from chorismate: step 4/7. Its pathway is quinol/quinone metabolism; menaquinone biosynthesis. Functionally, converts 2-succinyl-6-hydroxy-2,4-cyclohexadiene-1-carboxylate (SHCHC) to 2-succinylbenzoate (OSB). This Escherichia coli (strain SMS-3-5 / SECEC) protein is o-succinylbenzoate synthase.